A 491-amino-acid polypeptide reads, in one-letter code: Katanin p60 ATPase-containing subunit A1 (491 aa).

Positions 1–29 are interaction with KATNB1; the sequence is MSLQMIVENVKLAREYALLGNYDSAMVYY. The segment at 1–75 is interaction with dynein and NDEL1; it reads MSLQMIVENV…VKDIMKTLES (75 aa). An interaction with microtubules; sufficient for microtubule severing activity region spans residues 1–185; it reads MSLQMIVENV…EPEANKFDGT (185 aa). Phosphoserine; by DYRK2 is present on Ser-42. The disordered stretch occupies residues 101-182; it reads PVPVERRPLP…AVTEPEANKF (82 aa). Over residues 145–169 the composition is skewed to basic and acidic residues; the sequence is HNDRGKAVRSREKKEQSKGREEKNK. Residue 249–256 coordinates ATP; that stretch reads GPPGTGKT.

The protein belongs to the AAA ATPase family. Katanin p60 subunit A1 subfamily. In terms of assembly, can homooligomerize into hexameric rings, which may be promoted by interaction with microtubules. Interacts with KATNB1, which may serve as a targeting subunit. Interacts with ASPM; the katanin complex formation KATNA1:KATNB1 is required for the association of ASPM. Interacts with dynein and NDEL1. Associates with the E3 ligase complex containing DYRK2, EDD/UBR5, DDB1 and DCAF1 proteins (EDVP complex). Interacts with KLHL42 (via the kelch domains). Interacts with CUL3; the interaction is enhanced by KLHL42. Interacts with KATNB1 and KATNBL1. Interacts with CAMSAP2 and CAMSAP3; leading to regulate the length of CAMSAP-decorated microtubule stretches. In terms of processing, phosphorylation by DYRK2 triggers ubiquitination and subsequent degradation. Ubiquitinated by the BCR(KLHL42) E3 ubiquitin ligase complex, leading to its proteasomal degradation. Ubiquitinated by the EDVP E3 ligase complex and subsequently targeted for proteasomal degradation.

The protein localises to the cytoplasm. It is found in the midbody. It localises to the cytoskeleton. Its subcellular location is the microtubule organizing center. The protein resides in the centrosome. The protein localises to the spindle pole. It is found in the spindle. The enzyme catalyses n ATP + n H2O + a microtubule = n ADP + n phosphate + (n+1) alpha/beta tubulin heterodimers.. Its activity is regulated as follows. ATPase activity is stimulated by microtubules, which promote homooligomerization. ATP-dependent microtubule severing is stimulated by interaction with KATNB1. Functionally, catalytic subunit of a complex which severs microtubules in an ATP-dependent manner. Microtubule severing may promote rapid reorganization of cellular microtubule arrays and the release of microtubules from the centrosome following nucleation. Microtubule release from the mitotic spindle poles may allow depolymerization of the microtubule end proximal to the spindle pole, leading to poleward microtubule flux and poleward motion of chromosome. The function in regulating microtubule dynamics at spindle poles seems to depend on the association of the katanin KATNA1:KATNB1 complex with ASPM which recruits it to microtubules. Reversely KATNA1:KATNB1 can enhance ASPM blocking activity on microtubule minus-end growth. Microtubule release within the cell body of neurons may be required for their transport into neuronal processes by microtubule-dependent motor proteins. This transport is required for axonal growth. The polypeptide is Katanin p60 ATPase-containing subunit A1 (Katna1) (Mus musculus (Mouse)).